The chain runs to 160 residues: Single-stranded DNA-binding protein 3 (160 aa).

One can recognise an SSB domain in the interval 2–104; that stretch reads MNRVVLVGRL…IVAESVQFLE (103 aa). Residues 106 to 133 are compositionally biased toward polar residues; that stretch reads KQNGAGGSTSNNNQSETNYSNDNKTSSY. Residues 106-160 are disordered; that stretch reads KQNGAGGSTSNNNQSETNYSNDNKTSSYRADRSQNGDSFANEGAPVDINPDDLPF.

In terms of assembly, homotetramer.

The sequence is that of Single-stranded DNA-binding protein 3 (ssb3) from Listeria innocua serovar 6a (strain ATCC BAA-680 / CLIP 11262).